Here is an 862-residue protein sequence, read N- to C-terminus: Genome polyprotein (862 aa).

The N-myristoyl glycine; by host moiety is linked to residue Gly2.

This sequence belongs to the picornaviruses polyprotein family. Interacts with capsid protein VP1 and capsid protein VP3 to form heterotrimeric protomers. In terms of assembly, interacts with capsid protein VP0, and capsid protein VP3 to form heterotrimeric protomers. Five protomers subsequently associate to form pentamers which serve as building blocks for the capsid. Interacts with capsid protein VP2, capsid protein VP3 and capsid protein VP4 following cleavage of capsid protein VP0. As to quaternary structure, interacts with capsid protein VP1 and capsid protein VP3 in the mature capsid. Interacts with capsid protein VP0 and capsid protein VP1 to form heterotrimeric protomers. Five protomers subsequently associate to form pentamers which serve as building blocks for the capsid. Interacts with capsid protein VP4 in the mature capsid. Interacts with protein 2C; this interaction may be important for virion morphogenesis. In terms of assembly, interacts with capsid protein VP1 and capsid protein VP3. In terms of processing, specific enzymatic cleavages in vivo by the viral proteases yield processing intermediates and the mature proteins. Myristoylation is required for the formation of pentamers during virus assembly. Further assembly of 12 pentamers and a molecule of genomic RNA generates the provirion. Post-translationally, during virion maturation, immature virions are rendered infectious following cleavage of VP0 into VP4 and VP2. This maturation seems to be an autocatalytic event triggered by the presence of RNA in the capsid and it is followed by a conformational change infectious virion. In terms of processing, myristoylation is required during RNA encapsidation and formation of the mature virus particle.

The protein resides in the virion. The protein localises to the host cytoplasm. Forms an icosahedral capsid of pseudo T=3 symmetry with capsid proteins VP2 and VP3. The capsid is 300 Angstroms in diameter, composed of 60 copies of each capsid protein and enclosing the viral positive strand RNA genome. Capsid protein VP1 mainly forms the vertices of the capsid. Capsid protein VP1 interacts with host cell receptor to provide virion attachment to target host cells. This attachment induces virion internalization. Tyrosine kinases are probably involved in the entry process. After binding to its receptor, the capsid undergoes conformational changes. Capsid protein VP1 N-terminus (that contains an amphipathic alpha-helix) and capsid protein VP4 are externalized. Together, they shape a pore in the host membrane through which viral genome is translocated to host cell cytoplasm. In terms of biological role, forms an icosahedral capsid of pseudo T=3 symmetry with capsid proteins VP2 and VP3. The capsid is 300 Angstroms in diameter, composed of 60 copies of each capsid protein and enclosing the viral positive strand RNA genome. Its function is as follows. Lies on the inner surface of the capsid shell. After binding to the host receptor, the capsid undergoes conformational changes. Capsid protein VP4 is released, Capsid protein VP1 N-terminus is externalized, and together, they shape a pore in the host membrane through which the viral genome is translocated into the host cell cytoplasm. Functionally, component of immature procapsids, which is cleaved into capsid proteins VP4 and VP2 after maturation. Allows the capsid to remain inactive before the maturation step. This is Genome polyprotein from Echovirus 16 (strain Harrington).